Here is a 1039-residue protein sequence, read N- to C-terminus: Protein male-specific lethal-1 (1039 aa).

Residues Met-1–Ala-13 show a composition bias toward basic residues. Disordered regions lie at residues Met-1–Gln-44 and Arg-171–Ile-199. Ser-18 is subject to Phosphoserine. Ser-238 carries the post-translational modification Phosphoserine. Disordered regions lie at residues His-244 to Asn-266, Gly-358 to Asn-454, Lys-485 to Val-691, and Ile-729 to Thr-799. The segment covering Lys-255 to Asn-266 has biased composition (basic and acidic residues). Residues Glu-368–Tyr-392 show a composition bias toward acidic residues. Residues Ser-397–Glu-407 are compositionally biased toward basic and acidic residues. Over residues Ala-431–Ala-445 the composition is skewed to polar residues. Ser-433 is subject to Phosphoserine. Position 434 is a phosphothreonine (Thr-434). Ser-492 and Ser-496 each carry phosphoserine. Composition is skewed to basic and acidic residues over residues Pro-504–Ala-515 and Pro-523–Lys-570. Composition is skewed to polar residues over residues Thr-581–Lys-592 and Asn-609–Leu-625. A Phosphoserine modification is found at Ser-585. Thr-659 carries the post-translational modification Phosphothreonine. A phosphoserine mark is found at Ser-682 and Ser-684. A Phosphothreonine modification is found at Thr-747. Residue Ser-749 is modified to Phosphoserine. Phosphothreonine is present on residues Thr-750, Thr-751, and Thr-753. Residues Gln-759 to Gln-768 show a composition bias toward polar residues. Residues Ser-764 and Ser-765 each carry the phosphoserine modification. Thr-788 carries the post-translational modification Phosphothreonine. Ser-810 carries the post-translational modification Phosphoserine. A phosphothreonine mark is found at Thr-813 and Thr-832. One can recognise a PEHE domain in the interval Ser-865–Trp-983. A phosphoserine mark is found at Ser-879 and Ser-889. The tract at residues Glu-886–Glu-904 is interaction with mof HAT domain. The tract at residues Ile-1011–Arg-1039 is disordered. The residue at position 1014 (Thr-1014) is a Phosphothreonine. Phosphoserine is present on Ser-1025. The segment covering Pro-1030–Arg-1039 has biased composition (basic residues). A Nuclear localization signal motif is present at residues Arg-1032–Lys-1037.

It belongs to the msl-1 family. As to quaternary structure, component of the male-specific lethal (MSL) histone acetyltransferase complex, composed of mof, mle, msl-1, msl-2 and msl-3 proteins, as well as roX1 and roX2 non-coding RNAs. Interacts (via PEHE domain) with mof (via HAT domain) and msl-3 (via MRG domain); both interactions are direct. Interacts with tamo via the nuclear localization signal. Component of a maternal MSL subcomplex composed of mof, msl-1 and msl-3. Phosphorylation at Ser-18, Thr743, Thr-747 and Thr-751 is required to promote phosphorylation of 'Ser-5' of the C-terminal heptapeptide repeat domain (CTD) of the largest RNA polymerase II subunit Polr2A. Phosphorylated by Cdk7 in vitro. In contrast, phosphorylation at Ser-18, Thr743, Thr-747 and Thr-751 does not affect its role in dosage compensation in males. In terms of processing, ubiquitinated by msl-2.

Its subcellular location is the nucleus. The protein localises to the chromosome. Functionally, component of the male-specific lethal (MSL) histone acetyltransferase complex, a multiprotein complex essential for elevating transcription of the single X chromosome in the male (X chromosome dosage compensation). The MSL complex specifically associates with the single X chromosome in males and mediates formation of H4K16ac, promoting a two-fold activation of X chromosome. In complex with msl-2, promotes ubiquitination of histone H2B. In addition to its role in dosage compensation in males, regulates the activity of gene promoters: acts together with Cdk7 to promote phosphorylation of 'Ser-5' of the C-terminal heptapeptide repeat domain (CTD) of the largest RNA polymerase II subunit Polr2A. This Drosophila melanogaster (Fruit fly) protein is Protein male-specific lethal-1.